Consider the following 574-residue polypeptide: Probable inactive serine/threonine-protein kinase slob2 (574 aa).

The chain crosses the membrane as a helical span at residues 6 to 26 (YIIIAAVGGFAILTFIIIVVL). Residues 166–346 (YADRGSLRDF…PLHRLTYTSR (181 aa)) enclose the Protein kinase domain. Asn-358 carries an N-linked (GlcNAc...) asparagine glycan. Positions 366–386 (SKPNSKDLSQPKLKDLKKQKK) are disordered. N-linked (GlcNAc...) asparagine glycosylation is found at Asn-440, Asn-449, Asn-453, Asn-456, Asn-464, Asn-470, Asn-477, and Asn-483. The segment covering 450 to 493 (TTTNTTNTSTSSSLNSSFNSNVSTSYSNATTTTNTTSASSVSPP) has biased composition (low complexity). Residues 450-574 (TTTNTTNTST…DKSGPLLKKS (125 aa)) form a disordered region. The span at 494 to 539 (ISSPPPPPPPPPPSKSSGPPPPPPPPPKSSGPPPPPPPKSSPPPPA) shows a compositional bias: pro residues. The span at 546–556 (LLSSIESFSSS) shows a compositional bias: low complexity.

It belongs to the protein kinase superfamily. Ser/Thr protein kinase family.

The protein localises to the membrane. The polypeptide is Probable inactive serine/threonine-protein kinase slob2 (slob2) (Dictyostelium discoideum (Social amoeba)).